The primary structure comprises 342 residues: Heat-inducible transcription repressor HrcA (342 aa).

Belongs to the HrcA family.

Its function is as follows. Negative regulator of class I heat shock genes (grpE-dnaK-dnaJ and groELS operons). Prevents heat-shock induction of these operons. This chain is Heat-inducible transcription repressor HrcA, found in Geobacter sulfurreducens (strain ATCC 51573 / DSM 12127 / PCA).